Consider the following 357-residue polypeptide: UDP-N-acetylglucosamine--N-acetylmuramyl-(pentapeptide) pyrophosphoryl-undecaprenol N-acetylglucosamine transferase (357 aa).

UDP-N-acetyl-alpha-D-glucosamine is bound by residues 14–16 (TGG), Asn-126, Arg-162, Ser-190, Ile-246, 265–270 (ALTVCE), and Gln-290.

Belongs to the glycosyltransferase 28 family. MurG subfamily.

The protein localises to the cell inner membrane. The enzyme catalyses di-trans,octa-cis-undecaprenyl diphospho-N-acetyl-alpha-D-muramoyl-L-alanyl-D-glutamyl-meso-2,6-diaminopimeloyl-D-alanyl-D-alanine + UDP-N-acetyl-alpha-D-glucosamine = di-trans,octa-cis-undecaprenyl diphospho-[N-acetyl-alpha-D-glucosaminyl-(1-&gt;4)]-N-acetyl-alpha-D-muramoyl-L-alanyl-D-glutamyl-meso-2,6-diaminopimeloyl-D-alanyl-D-alanine + UDP + H(+). The protein operates within cell wall biogenesis; peptidoglycan biosynthesis. In terms of biological role, cell wall formation. Catalyzes the transfer of a GlcNAc subunit on undecaprenyl-pyrophosphoryl-MurNAc-pentapeptide (lipid intermediate I) to form undecaprenyl-pyrophosphoryl-MurNAc-(pentapeptide)GlcNAc (lipid intermediate II). This chain is UDP-N-acetylglucosamine--N-acetylmuramyl-(pentapeptide) pyrophosphoryl-undecaprenol N-acetylglucosamine transferase, found in Histophilus somni (strain 129Pt) (Haemophilus somnus).